The following is a 217-amino-acid chain: Putative cobalt transport protein CbiM (217 aa).

6 helical membrane passes run 8–28 (LPPE…VYGA), 44–64 (LIAV…PSVT), 74–94 (GIAV…IVLL), 107–127 (TLGA…WIAF), 139–161 (VFAA…LALA), and 181–201 (IFAV…VMLV).

This sequence belongs to the CbiM family. In terms of assembly, forms an energy-coupling factor (ECF) transporter complex composed of an ATP-binding protein (A component, CbiO), a transmembrane protein (T component, CbiQ) and 2 possible substrate-capture proteins (S components, CbiM and CbiN) of unknown stoichimetry.

It localises to the cell membrane. The protein operates within cofactor biosynthesis; adenosylcobalamin biosynthesis. In terms of biological role, part of the energy-coupling factor (ECF) transporter complex CbiMNOQ involved in cobalt import. The sequence is that of Putative cobalt transport protein CbiM from Archaeoglobus fulgidus (strain ATCC 49558 / DSM 4304 / JCM 9628 / NBRC 100126 / VC-16).